Consider the following 338-residue polypeptide: Holliday junction branch migration complex subunit RuvB (338 aa).

Residues 1–180 form a large ATPase domain (RuvB-L) region; sequence MERLLDNKFS…FGIIERLDYY (180 aa). ATP-binding residues include Leu19, Arg20, Gly61, Lys64, Thr65, Thr66, Arg170, Tyr180, and Arg217. Thr65 provides a ligand contact to Mg(2+). The small ATPAse domain (RuvB-S) stretch occupies residues 181-251; that stretch reads TVEELSQIVM…VAKSGLEMFE (71 aa). Residues 254–338 are head domain (RuvB-H); that stretch reads EYGLDLVDRN…FKLKESGDNR (85 aa). DNA is bound by residues Lys309 and Arg314.

The protein belongs to the RuvB family. In terms of assembly, homohexamer. Forms an RuvA(8)-RuvB(12)-Holliday junction (HJ) complex. HJ DNA is sandwiched between 2 RuvA tetramers; dsDNA enters through RuvA and exits via RuvB. An RuvB hexamer assembles on each DNA strand where it exits the tetramer. Each RuvB hexamer is contacted by two RuvA subunits (via domain III) on 2 adjacent RuvB subunits; this complex drives branch migration. In the full resolvosome a probable DNA-RuvA(4)-RuvB(12)-RuvC(2) complex forms which resolves the HJ.

Its subcellular location is the cytoplasm. It catalyses the reaction ATP + H2O = ADP + phosphate + H(+). Functionally, the RuvA-RuvB-RuvC complex processes Holliday junction (HJ) DNA during genetic recombination and DNA repair, while the RuvA-RuvB complex plays an important role in the rescue of blocked DNA replication forks via replication fork reversal (RFR). RuvA specifically binds to HJ cruciform DNA, conferring on it an open structure. The RuvB hexamer acts as an ATP-dependent pump, pulling dsDNA into and through the RuvAB complex. RuvB forms 2 homohexamers on either side of HJ DNA bound by 1 or 2 RuvA tetramers; 4 subunits per hexamer contact DNA at a time. Coordinated motions by a converter formed by DNA-disengaged RuvB subunits stimulates ATP hydrolysis and nucleotide exchange. Immobilization of the converter enables RuvB to convert the ATP-contained energy into a lever motion, pulling 2 nucleotides of DNA out of the RuvA tetramer per ATP hydrolyzed, thus driving DNA branch migration. The RuvB motors rotate together with the DNA substrate, which together with the progressing nucleotide cycle form the mechanistic basis for DNA recombination by continuous HJ branch migration. Branch migration allows RuvC to scan DNA until it finds its consensus sequence, where it cleaves and resolves cruciform DNA. The protein is Holliday junction branch migration complex subunit RuvB of Caldicellulosiruptor bescii (strain ATCC BAA-1888 / DSM 6725 / KCTC 15123 / Z-1320) (Anaerocellum thermophilum).